The following is a 317-amino-acid chain: Anamorsin homolog (317 aa).

Positions 1 to 192 (MREVLVVSES…ITGVRPNWKA (192 aa)) are N-terminal SAM-like domain. The tract at residues 193–216 (KGDRKSSSIHAAPIDGYISKAPDY) is linker. Residues Cys-219, Cys-226, Cys-229, and Cys-231 each coordinate [2Fe-2S] cluster. The fe-S binding site A stretch occupies residues 219-231 (CSTKPRACANCTC). Cys-286, Cys-289, Cys-297, and Cys-300 together coordinate [4Fe-4S] cluster. 2 consecutive short sequence motifs (cx2C motif) follow at residues 286 to 289 (CGNC) and 297 to 300 (CDSC). Residues 286–300 (CGNCYLGDAFRCDSC) are fe-S binding site B.

This sequence belongs to the anamorsin family. As to quaternary structure, monomer. It depends on [2Fe-2S] cluster as a cofactor. The cofactor is [4Fe-4S] cluster.

It localises to the cytoplasm. Its subcellular location is the mitochondrion intermembrane space. Functionally, component of the cytosolic iron-sulfur (Fe-S) protein assembly (CIA) machinery. Required for the maturation of extramitochondrial Fe-S proteins. Part of an electron transfer chain functioning in an early step of cytosolic Fe-S biogenesis, facilitating the de novo assembly of a [4Fe-4S] cluster on the cytosolic Fe-S scaffold complex. Electrons are transferred from NADPH via a FAD- and FMN-containing diflavin oxidoreductase. Together with the diflavin oxidoreductase, also required for the assembly of the diferric tyrosyl radical cofactor of ribonucleotide reductase (RNR), probably by providing electrons for reduction during radical cofactor maturation in the catalytic small subunit. The polypeptide is Anamorsin homolog (Theileria parva (East coast fever infection agent)).